The sequence spans 272 residues: Formamidopyrimidine-DNA glycosylase (272 aa).

Proline 2 (schiff-base intermediate with DNA) is an active-site residue. Glutamate 3 functions as the Proton donor in the catalytic mechanism. Lysine 58 serves as the catalytic Proton donor; for beta-elimination activity. The DNA site is built by histidine 92, arginine 111, and arginine 153. The FPG-type zinc finger occupies 238-272 (NVYGRGGEPCPVCAKPLTEKPLSQRTTVYCTHCQN). Catalysis depends on arginine 262, which acts as the Proton donor; for delta-elimination activity.

Belongs to the FPG family. Monomer. It depends on Zn(2+) as a cofactor.

It carries out the reaction Hydrolysis of DNA containing ring-opened 7-methylguanine residues, releasing 2,6-diamino-4-hydroxy-5-(N-methyl)formamidopyrimidine.. It catalyses the reaction 2'-deoxyribonucleotide-(2'-deoxyribose 5'-phosphate)-2'-deoxyribonucleotide-DNA = a 3'-end 2'-deoxyribonucleotide-(2,3-dehydro-2,3-deoxyribose 5'-phosphate)-DNA + a 5'-end 5'-phospho-2'-deoxyribonucleoside-DNA + H(+). Its function is as follows. Involved in base excision repair of DNA damaged by oxidation or by mutagenic agents. Acts as a DNA glycosylase that recognizes and removes damaged bases. Has a preference for oxidized purines, such as 7,8-dihydro-8-oxoguanine (8-oxoG). Has AP (apurinic/apyrimidinic) lyase activity and introduces nicks in the DNA strand. Cleaves the DNA backbone by beta-delta elimination to generate a single-strand break at the site of the removed base with both 3'- and 5'-phosphates. This is Formamidopyrimidine-DNA glycosylase from Teredinibacter turnerae (strain ATCC 39867 / T7901).